The primary structure comprises 323 residues: Phosphopantothenate--cysteine ligase 2 (323 aa).

The protein belongs to the PPC synthetase family. As to quaternary structure, homodimer.

The enzyme catalyses (R)-4'-phosphopantothenate + L-cysteine + CTP = N-[(R)-4-phosphopantothenoyl]-L-cysteine + CMP + diphosphate + H(+). It functions in the pathway cofactor biosynthesis; coenzyme A biosynthesis; CoA from (R)-pantothenate: step 2/5. Catalyzes the first step in the biosynthesis of coenzyme A from vitamin B5, where cysteine is conjugated to 4'-phosphopantothenate to form 4-phosphopantothenoylcysteine. The sequence is that of Phosphopantothenate--cysteine ligase 2 from Oryza sativa subsp. japonica (Rice).